A 209-amino-acid chain; its full sequence is Imidazole glycerol phosphate synthase subunit HisH (209 aa).

A Glutamine amidotransferase type-1 domain is found at Met1–Ser205. The active-site Nucleophile is the Cys79. Residues His180 and Glu182 contribute to the active site.

As to quaternary structure, heterodimer of HisH and HisF.

It is found in the cytoplasm. It carries out the reaction 5-[(5-phospho-1-deoxy-D-ribulos-1-ylimino)methylamino]-1-(5-phospho-beta-D-ribosyl)imidazole-4-carboxamide + L-glutamine = D-erythro-1-(imidazol-4-yl)glycerol 3-phosphate + 5-amino-1-(5-phospho-beta-D-ribosyl)imidazole-4-carboxamide + L-glutamate + H(+). The catalysed reaction is L-glutamine + H2O = L-glutamate + NH4(+). The protein operates within amino-acid biosynthesis; L-histidine biosynthesis; L-histidine from 5-phospho-alpha-D-ribose 1-diphosphate: step 5/9. Its function is as follows. IGPS catalyzes the conversion of PRFAR and glutamine to IGP, AICAR and glutamate. The HisH subunit catalyzes the hydrolysis of glutamine to glutamate and ammonia as part of the synthesis of IGP and AICAR. The resulting ammonia molecule is channeled to the active site of HisF. This Bacillus anthracis (strain CDC 684 / NRRL 3495) protein is Imidazole glycerol phosphate synthase subunit HisH.